A 517-amino-acid polypeptide reads, in one-letter code: Putative succinate-semialdehyde dehydrogenase [NADP(+)] (517 aa).

NADP(+) is bound by residues Trp-157 to Asn-158, Lys-181 to Ser-184, and Gly-232 to Ser-233. The active-site Proton acceptor is Glu-254. Position 255 (Leu-255) interacts with NADP(+). The active-site Nucleophile is the Cys-288. Glu-386 contributes to the NADP(+) binding site.

The protein belongs to the aldehyde dehydrogenase family.

It carries out the reaction succinate semialdehyde + NADP(+) + H2O = succinate + NADPH + 2 H(+). Catalyzes the NADP(+)-dependent oxidation of succinate semialdehyde to succinate. Although it has succinate semialdehyde dehydrogenase activity, is likely to act physiologically on a different aldehyde(s). This chain is Putative succinate-semialdehyde dehydrogenase [NADP(+)] (gabD2), found in Mycolicibacterium smegmatis (strain ATCC 700084 / mc(2)155) (Mycobacterium smegmatis).